The sequence spans 472 residues: Endoplasmic reticulum oxidoreductin-2 (472 aa).

Positions 1–37 are cleaved as a signal peptide; that stretch reads MAETDVGSVKGKEKGSGKRWILLIGAIAAVLLAVVVA. Asn-44 is a glycosylation site (N-linked (GlcNAc...) asparagine). Intrachain disulfides connect Cys-55–Cys-74, Cys-57–Cys-72, Cys-111–Cys-371, Cys-120–Cys-125, Cys-221–Cys-230, and Cys-374–Cys-377. Residues Arg-200, Thr-202, and Trp-213 each contribute to the FAD site. Ser-241 and His-244 together coordinate FAD. N-linked (GlcNAc...) asparagine glycosylation occurs at Asn-267. FAD-binding residues include Arg-274 and Arg-281. N-linked (GlcNAc...) asparagine glycosylation is present at Asn-364.

It belongs to the EROs family. In terms of assembly, may function both as a monomer and a homodimer. FAD is required as a cofactor. Post-translationally, N-glycosylated.

The protein localises to the endoplasmic reticulum membrane. Its function is as follows. Essential oxidoreductase that oxidizes proteins in the endoplasmic reticulum to produce disulfide bonds. Acts by oxidizing directly PDI isomerase through a direct disulfide exchange. Does not act as a direct oxidant of folding substrate, but relies on PDI to transfer oxidizing equivalent. Does not oxidize all PDI related proteins, suggesting that it can discriminate between PDI and related proteins. Its reoxidation probably involves electron transfer to molecular oxygen via FAD. Acts independently of glutathione. May be responsible for a significant proportion of reactive oxygen species (ROS) in the cell, thereby being a source of oxidative stress. This chain is Endoplasmic reticulum oxidoreductin-2 (AERO2), found in Arabidopsis thaliana (Mouse-ear cress).